The following is a 275-amino-acid chain: MSNAQLETAIEAAWEARDTITPATMGETREAIEDTLAALDGGTLRVAEKQDSGDWHVNQWAKKAVLLGFRLKDMEMQGGSAQGGSWWDKVDSKWATWGDNEWGAAGFRAVPNCVVRKSAYIAPGVVLMPSFVNLGAYVDSGTMVDTWATVGSCAQIGKNVHLSGGVGIGGVLEPMQAGPTIIEDNCFIGARSEVVEGCIVREGSVLGMGVFIGQSTKIVDRETGDVMYGEVPSGSVVVAGSLPSKNGVNLYCAVIVKRVDERTRSKTSINELLRD.

Substrate is bound by residues Arg-108 and Asp-145.

This sequence belongs to the transferase hexapeptide repeat family. As to quaternary structure, homotrimer.

Its subcellular location is the cytoplasm. The enzyme catalyses (S)-2,3,4,5-tetrahydrodipicolinate + succinyl-CoA + H2O = (S)-2-succinylamino-6-oxoheptanedioate + CoA. The protein operates within amino-acid biosynthesis; L-lysine biosynthesis via DAP pathway; LL-2,6-diaminopimelate from (S)-tetrahydrodipicolinate (succinylase route): step 1/3. In Jannaschia sp. (strain CCS1), this protein is 2,3,4,5-tetrahydropyridine-2,6-dicarboxylate N-succinyltransferase.